The following is an 851-amino-acid chain: Beta-galactosidase BoGH2A (851 aa).

The first 19 residues, 1–19, serve as a signal peptide directing secretion; the sequence is MMIGKLKYLMLGGCLILGS. Residue Cys20 is the site of N-palmitoyl cysteine attachment. The S-diacylglycerol cysteine moiety is linked to residue Cys20. The active-site Proton donor is the Glu437. The active-site Nucleophile is the Glu544.

It belongs to the glycosyl hydrolase 2 family.

It is found in the cell inner membrane. It carries out the reaction Hydrolysis of terminal non-reducing beta-D-galactose residues in beta-D-galactosides.. It participates in glucan metabolism; xyloglucan degradation. Catalyzes the hydrolysis of terminal non-reducing beta-D-galactose residues in beta-D-galactosides in xyloglucan degradation, converting 'L' units to 'X' units. The chain is Beta-galactosidase BoGH2A from Bacteroides ovatus (strain ATCC 8483 / DSM 1896 / JCM 5824 / BCRC 10623 / CCUG 4943 / NCTC 11153).